Here is a 554-residue protein sequence, read N- to C-terminus: NADH-ubiquinone oxidoreductase chain 5 (554 aa).

The next 15 membrane-spanning stretches (helical) occupy residues 6 to 26 (VCGI…LYLL), 57 to 77 (LMFI…SISY), 93 to 113 (ILFL…SIIL), 150 to 170 (IGLL…LSFY), 175 to 197 (FMMI…STWL), 209 to 228 (SLVH…IRYV), 238 to 258 (YIML…NFEL), 263 to 283 (VVAY…SIGS), 286 to 306 (LVFL…MCVG), 332 to 352 (SMIL…VGYY), 379 to 399 (IFTV…FLMM), 409 to 429 (IMCI…KLIF), 441 to 461 (LLMI…IMGF), 480 to 500 (FLFM…MMFT), and 532 to 552 (LMIN…IYLI).

The protein belongs to the complex I subunit 5 family.

It localises to the mitochondrion inner membrane. The enzyme catalyses a ubiquinone + NADH + 5 H(+)(in) = a ubiquinol + NAD(+) + 4 H(+)(out). In terms of biological role, core subunit of the mitochondrial membrane respiratory chain NADH dehydrogenase (Complex I) that is believed to belong to the minimal assembly required for catalysis. Complex I functions in the transfer of electrons from NADH to the respiratory chain. The immediate electron acceptor for the enzyme is believed to be ubiquinone. In Apis mellifera ligustica (Common honeybee), this protein is NADH-ubiquinone oxidoreductase chain 5 (ND5).